Consider the following 124-residue polypeptide: Small ribosomal subunit protein uS12 (124 aa).

Asp89 carries the 3-methylthioaspartic acid modification. Positions 105 to 124 are disordered; that stretch reads QGVKNRKQARSRYGAKKEKS. The segment covering 108–118 has biased composition (basic residues); it reads KNRKQARSRYG.

It belongs to the universal ribosomal protein uS12 family. In terms of assembly, part of the 30S ribosomal subunit. Contacts proteins S8 and S17. May interact with IF1 in the 30S initiation complex.

In terms of biological role, with S4 and S5 plays an important role in translational accuracy. Functionally, interacts with and stabilizes bases of the 16S rRNA that are involved in tRNA selection in the A site and with the mRNA backbone. Located at the interface of the 30S and 50S subunits, it traverses the body of the 30S subunit contacting proteins on the other side and probably holding the rRNA structure together. The combined cluster of proteins S8, S12 and S17 appears to hold together the shoulder and platform of the 30S subunit. This Mycobacterium sp. (strain JLS) protein is Small ribosomal subunit protein uS12.